The chain runs to 171 residues: MVVAVYPGTFDPLTRGHEDLVRRASSIFDTLVVGVADSRNKKPFFTLEERLDIAHEVLGHYPNVQVMSFKGLLKDFVRSNNARVIVRGLRAVSDFEYEFQMAGMNRYLLPDVETMFMTPSDQYQFISGTIVREIAQLGGDVSKFVFPSVEQWLKEKVAALDPANGASAAQP.

T9 lines the substrate pocket. Residues 9–10 (TF) and H17 each bind ATP. The substrate site is built by K41, L73, and R87. Residues 88-90 (GLR), E98, and 123-129 (YQFISGT) contribute to the ATP site.

This sequence belongs to the bacterial CoaD family. As to quaternary structure, homohexamer. Mg(2+) is required as a cofactor.

Its subcellular location is the cytoplasm. It carries out the reaction (R)-4'-phosphopantetheine + ATP + H(+) = 3'-dephospho-CoA + diphosphate. It functions in the pathway cofactor biosynthesis; coenzyme A biosynthesis; CoA from (R)-pantothenate: step 4/5. Functionally, reversibly transfers an adenylyl group from ATP to 4'-phosphopantetheine, yielding dephospho-CoA (dPCoA) and pyrophosphate. The sequence is that of Phosphopantetheine adenylyltransferase from Paraburkholderia xenovorans (strain LB400).